A 204-amino-acid polypeptide reads, in one-letter code: Large ribosomal subunit protein eL15A (204 aa).

Residues Leu-164–Ala-185 are disordered. A compositionally biased stretch (basic residues) spans Lys-169 to Ala-185.

The protein belongs to the eukaryotic ribosomal protein eL15 family. In terms of assembly, component of the large ribosomal subunit (LSU). Mature yeast ribosomes consist of a small (40S) and a large (60S) subunit. The 40S small subunit contains 1 molecule of ribosomal RNA (18S rRNA) and 33 different proteins (encoded by 57 genes). The large 60S subunit contains 3 rRNA molecules (25S, 5.8S and 5S rRNA) and 46 different proteins (encoded by 81 genes).

Its subcellular location is the cytoplasm. Functionally, component of the ribosome, a large ribonucleoprotein complex responsible for the synthesis of proteins in the cell. The small ribosomal subunit (SSU) binds messenger RNAs (mRNAs) and translates the encoded message by selecting cognate aminoacyl-transfer RNA (tRNA) molecules. The large subunit (LSU) contains the ribosomal catalytic site termed the peptidyl transferase center (PTC), which catalyzes the formation of peptide bonds, thereby polymerizing the amino acids delivered by tRNAs into a polypeptide chain. The nascent polypeptides leave the ribosome through a tunnel in the LSU and interact with protein factors that function in enzymatic processing, targeting, and the membrane insertion of nascent chains at the exit of the ribosomal tunnel. The chain is Large ribosomal subunit protein eL15A from Saccharomyces cerevisiae (strain ATCC 204508 / S288c) (Baker's yeast).